A 964-amino-acid polypeptide reads, in one-letter code: MSSTRPELKFSDVSEERNFYKKYTGLPKKPLKTIRLVDKGDYYTVIGSDAIFVADSVYHTQSVLKNCQLDPVTAKNFHEPTKYVTVSLQVLATLLKLCLLDLGYKVEIYDKGWKLIKSASPGNIEQVNELMNMNIDSSIIIASLKVQWNSQDGNCIIGVAFIDTTAYKVGMLDIVDNEVYSNLESFLIQLGVKECLVQDLTSNSNSNAEMQKVINVIDRCGCVVTLLKNSEFSEKDVELDLTKLLGDDLALSLPQKYSKLSMGACNALIGYLQLLSEQDQVGKYELVEHKLKEFMKLDASAIKALNLFPQGPQNPFGSNNLAVSGFTSAGNSGKVTSLFQLLNHCKTNAGVRLLNEWLKQPLTNIDEINKRHDLVDYLIDQIELRQMLTSEYLPMIPDIRRLTKKLNKRGNLEDVLKIYQFSKRIPEIVQVFTSFLEDDSPTEPVNELVRSVWLAPLSHHVEPLSKFEEMVETTVDLDAYEENNEFMIKVEFNEELGKIRSKLDTLRDEIHSIHLDSAEDLGFDPDKKLKLENHHLHGWCMRLTRNDAKELRKHKKYIELSTVKAGIFFSTKQLKSIANETNILQKEYDKQQSALVREIINITLTYTPVFEKLSLVLAHLDVIASFAHTSSYAPIPYIRPKLHPMDSERRTHLISSRHPVLEMQDDISFISNDVTLESGKGDFLIITGPNMGGKSTYIRQVGVISLMAQIGCFVPCEEAEIAIVDAILCRVGAGDSQLKGVSTFMVEILETASILKNASKNSLIIVDELGRGTSTYDGFGLAWAIAEHIASKIGCFALFATHFHELTELSEKLPNVKNMHVVAHIEKNLKEQKHDDEDITLLYKVEPGISDQSFGIHVAEVVQFPEKIVKMAKRKANELDDLKTNNEDLKKAKLSLQEVNEGNIRLKALLKEWIRKVKEEGLHDPSKITEEASQHKIQELLRAIANEPEKENDNYLKYIKALLL.

Residue 688-695 participates in ATP binding; that stretch reads GPNMGGKS. The segment at 851–964 is interaction with MSH6; the sequence is DQSFGIHVAE…YLKYIKALLL (114 aa).

It belongs to the DNA mismatch repair MutS family. In terms of assembly, heterodimer consisting of MSH2-MSH6 (MutS alpha) or MSH2-MSH3 (MutS beta). Both heterodimers form a ternary complex with MutL alpha (MLH1-PMS1). MutS beta also forms a ternary complex with MutL beta (MLH1-MLH3), and possibly with a MLH1-MLH2 heterodimer. Both heterodimers interact with proliferating cell nuclear antigen (PCNA/POL30). This interaction is disrupted upon binding of the MutS heterodimers to mismatch DNA. Interacts with SAW1.

The protein localises to the nucleus. Inhibited by Cd(2+). Its function is as follows. Component of the post-replicative DNA mismatch repair system (MMR). Forms two different heterodimers: MutS alpha (MSH2-MSH6 heterodimer) and MutS beta (MSH2-MSH3 heterodimer), which bind to DNA mismatches thereby initiating DNA repair. MSH2 seems to act as a scaffold for the other MutS homologs that provide substrate-binding and substrate specificity. When bound, heterodimers bend the DNA helix and shield approximately 20 base pairs. MutS alpha acts mainly to repair base-base and single insertion-deletion mismatches that occur during replication, but can also repair longer insertion-deletion loops (IDLs), although with decreasing efficiency as the size of the extrahelical loop increases. MutS beta acts mainly to repair IDLs from 2 to 13 nucleotides in size, but can also repair base-base and single insertion-deletion mismatches. After mismatch binding, MutS alpha or beta form a ternary complex with a MutL heterodimer, which is thought to be responsible for directing the downstream MMR events, including strand discrimination, excision, and resynthesis. ATP binding and hydrolysis play a pivotal role in mismatch repair functions. Both subunits bind ATP, but with differing affinities, and their ATPase kinetics are also very different. MSH6 binds and hydrolyzes ATP rapidly, whereas MSH2 catalyzes ATP at a substantially slower rate. Binding to a mismatched base pair suppresses MSH6-catalyzed ATP hydrolysis, but not the activity of MSH2. ATP binding to both subunits is necessary to trigger a change in MutS alpha interaction with mismatched DNA, converting MutS alpha into a sliding clamp capable of hydrolysis-independent movement along DNA, and also facilitates formation of ternary complexes containing MutS and MutL proteins and the mismatch. MutS beta also has a role in regulation of heteroduplex formation during mitotic and meiotic recombination. MutS beta binds to DNA flap structures predicted to form during recombination, and is required for 3' non-homologous tail removal (NHTR). MutS beta-binding alters the DNA conformation of its substrate at the ds/ssDNA junction and may facilitate its recognition and/or cleavage by the downstream nucleotide excision repair (NER) RAD1-RAD10 endonuclease. This is DNA mismatch repair protein MSH2 (MSH2) from Saccharomyces cerevisiae (strain ATCC 204508 / S288c) (Baker's yeast).